We begin with the raw amino-acid sequence, 317 residues long: L-lactate dehydrogenase (317 aa).

Residues Val-16, Asp-37, Arg-42, Tyr-67, and 81–82 contribute to the NAD(+) site; that span reads GA. Substrate is bound by residues Gln-84 and Arg-90. NAD(+) contacts are provided by residues Ser-103, 120 to 122, and Ser-145; that span reads AAN. Substrate is bound at residue 122–125; sequence NPVD. 150–153 serves as a coordination point for substrate; it reads DSAR. Residue His-177 is the Proton acceptor of the active site. A Phosphotyrosine modification is found at Tyr-221. Substrate is bound at residue Thr-230.

Belongs to the LDH/MDH superfamily. LDH family. In terms of assembly, homotetramer.

It localises to the cytoplasm. The catalysed reaction is (S)-lactate + NAD(+) = pyruvate + NADH + H(+). It participates in fermentation; pyruvate fermentation to lactate; (S)-lactate from pyruvate: step 1/1. Its function is as follows. Catalyzes the conversion of lactate to pyruvate. This Limosilactobacillus fermentum (strain NBRC 3956 / LMG 18251) (Lactobacillus fermentum) protein is L-lactate dehydrogenase.